Reading from the N-terminus, the 471-residue chain is V-type ATP synthase beta chain (471 aa).

The protein belongs to the ATPase alpha/beta chains family.

Produces ATP from ADP in the presence of a proton gradient across the membrane. The V-type beta chain is a regulatory subunit. In Streptococcus pyogenes serotype M28 (strain MGAS6180), this protein is V-type ATP synthase beta chain.